Here is a 94-residue protein sequence, read N- to C-terminus: MNLKPIGDRLVLKKQEKEEEKTFSGIVLPSSAKEAPVYAEVLAIGSEVEEDEKMKGNIKVGDKVIYSKYAGTEIKLEDTDYILVKYEDILAVVE.

This sequence belongs to the GroES chaperonin family. As to quaternary structure, heptamer of 7 subunits arranged in a ring. Interacts with the chaperonin GroEL.

It localises to the cytoplasm. Functionally, together with the chaperonin GroEL, plays an essential role in assisting protein folding. The GroEL-GroES system forms a nano-cage that allows encapsulation of the non-native substrate proteins and provides a physical environment optimized to promote and accelerate protein folding. GroES binds to the apical surface of the GroEL ring, thereby capping the opening of the GroEL channel. The chain is Co-chaperonin GroES from Finegoldia magna (strain ATCC 29328 / DSM 20472 / WAL 2508) (Peptostreptococcus magnus).